We begin with the raw amino-acid sequence, 293 residues long: Glycine betaine-binding protein OpuAC (293 aa).

Residues 1 to 20 (MLKKIIGIGVSAMLALSLAA) form the signal peptide. The N-palmitoyl cysteine moiety is linked to residue Cys-21. Cys-21 carries S-diacylglycerol cysteine lipidation.

The complex is composed of two ATP-binding proteins (OpuAA), two transmembrane proteins (OpuAB) and a solute-binding protein (OpuAC). Interacts with FloT.

The protein localises to the cell membrane. It localises to the membrane raft. Functionally, involved in a multicomponent binding-protein-dependent transport system for glycine betaine. This is Glycine betaine-binding protein OpuAC (opuAC) from Bacillus subtilis (strain 168).